Reading from the N-terminus, the 143-residue chain is Large ribosomal subunit protein uL11 (143 aa).

Belongs to the universal ribosomal protein uL11 family. Part of the ribosomal stalk of the 50S ribosomal subunit. Interacts with L10 and the large rRNA to form the base of the stalk. L10 forms an elongated spine to which L12 dimers bind in a sequential fashion forming a multimeric L10(L12)X complex. In terms of processing, one or more lysine residues are methylated.

In terms of biological role, forms part of the ribosomal stalk which helps the ribosome interact with GTP-bound translation factors. The protein is Large ribosomal subunit protein uL11 of Salinispora tropica (strain ATCC BAA-916 / DSM 44818 / JCM 13857 / NBRC 105044 / CNB-440).